We begin with the raw amino-acid sequence, 250 residues long: Small ribosomal subunit protein uS3 (250 aa).

A KH type-2 domain is found at 39 to 111 (IRTLIKNHYP…KVQINIFEVK (73 aa)).

It belongs to the universal ribosomal protein uS3 family. As to quaternary structure, part of the 30S ribosomal subunit. Forms a tight complex with proteins S10 and S14.

Its function is as follows. Binds the lower part of the 30S subunit head. Binds mRNA in the 70S ribosome, positioning it for translation. The polypeptide is Small ribosomal subunit protein uS3 (Phytoplasma vitis (Flavescence doree phytoplasma)).